The following is a 63-amino-acid chain: Large ribosomal subunit protein eL37 (63 aa).

Zn(2+) contacts are provided by cysteine 20, cysteine 23, cysteine 35, and cysteine 38. The segment at 20–38 adopts a C4-type zinc-finger fold; that stretch reads CRRCGRRAFNVKKGYCAAC.

The protein belongs to the eukaryotic ribosomal protein eL37 family. As to quaternary structure, part of the 50S ribosomal subunit. The cofactor is Zn(2+).

Functionally, binds to the 23S rRNA. This chain is Large ribosomal subunit protein eL37, found in Thermococcus kodakarensis (strain ATCC BAA-918 / JCM 12380 / KOD1) (Pyrococcus kodakaraensis (strain KOD1)).